A 179-amino-acid chain; its full sequence is Mediator of RNA polymerase II transcription subunit 28 (179 aa).

The tract at residues 1-43 (MASSMCGMFPGQQPPGSLPPPGPGGPGQPGLLTGTPGNRGANN) is disordered. A compositionally biased stretch (pro residues) spans 12–26 (QQPPGSLPPPGPGGP). A coiled-coil region spans residues 109-139 (EQVEKEDASELKNELQRKEMLIQKHLAKIHH).

This sequence belongs to the Mediator complex subunit 28 family. In terms of assembly, component of the Mediator complex.

The protein resides in the nucleus. Component of the Mediator complex, a coactivator involved in the regulated transcription of nearly all RNA polymerase II-dependent genes. Mediator functions as a bridge to convey information from gene-specific regulatory proteins to the basal RNA polymerase II transcription machinery. Mediator is recruited to promoters by direct interactions with regulatory proteins and serves as a scaffold for the assembly of a functional preinitiation complex with RNA polymerase II and the general transcription factors. The chain is Mediator of RNA polymerase II transcription subunit 28 (med28) from Danio rerio (Zebrafish).